Here is a 1065-residue protein sequence, read N- to C-terminus: NLR family CARD domain-containing protein 3 (1065 aa).

The span at Met-1–Arg-10 shows a compositional bias: basic and acidic residues. The tract at residues Met-1–Arg-62 is disordered. The 322-residue stretch at Arg-139 to Glu-460 folds into the NACHT domain. Position 145–152 (Gly-145–Thr-152) interacts with ATP. A TRAF6-binding motif is present at residues Ser-457 to Glu-460. LRR repeat units follow at residues Glu-617–Cys-639, Lys-641–Gly-663, Asp-665–Arg-688, Asn-693–Asp-716, Asn-721–Glu-744, Asn-749–Asp-772, Asn-777–Glu-800, Asn-805–Gly-828, Asn-833–His-856, Asn-861–Val-884, Asn-889–Gln-912, Asn-917–Arg-940, Asn-945–Glu-968, Asn-973–Asn-996, Asn-1001–Asn-1029, and Arg-1031–Glu-1052.

The protein belongs to the NLRP family. In terms of assembly, directly interacts (via CARD) with TMEM173/STING; this interaction reduces TMEM173 trafficking to the perinuclear region in response to interferon stimulatory DNA. Also interacts, but to a lesser extent, with TBK1. Interacts with TRAF6; this interaction results in decreased TRAF6 'Lys-63'-linked polyubiquitination, but leaves 'Lys-48'-linked chains unchanged, promoting TRAF6 protein degradation. Interacts with PIK3R1/PIK3R2; this interaction disrupts the association between PIK3R1/PIK3R2 and the p110 catalytic subunit PIK3CA/PIK3CB/PIK3CD and reduces PIK3R1/PIK3R2 activation. Weakly interacts with PYCARD/ASC. Interacts with CASP1 and CASP5.

The protein resides in the cytoplasm. Its function is as follows. Negative regulator of the innate immune response. Attenuates signaling pathways activated by Toll-like receptors (TLRs) and the DNA sensor STING/TMEM173 in response to pathogen-associated molecular patterns, such as intracellular poly(dA:dT), but not poly(I:C), or in response to DNA virus infection, including that of Herpes simplex virus 1 (HSV1). May affect TLR4 signaling by acting at the level of TRAF6 ubiquitination, decreasing the activating 'Lys-63'-linked ubiquitination and leaving unchanged the degradative 'Lys-48'-linked ubiquitination. Inhibits the PI3K-AKT-mTOR pathway possibly by directly interacting with the posphatidylinositol 3-kinase regulatory subunit p85 (PIK3R1/PIK3R2) and disrupting the association between PIK3R1/PIK3R2 and the catalytic subunit p110 (PIK3CA/PIK3CB/PIK3CD) and reducing PIK3R1/PIK3R2 activation. Via its regulation of the PI3K-AKT-mTOR pathway, controls cell proliferation, predominantly in intestinal epithelial cells. May also affect NOD1- or NOD2-mediated NF-kappa-B activation. Might also affect the inflammatory response by preventing NLRP3 inflammasome formation, CASP1 cleavage and IL1B maturation. In Homo sapiens (Human), this protein is NLR family CARD domain-containing protein 3 (NLRC3).